The chain runs to 787 residues: Alpha-glucosidase 2 (787 aa).

Active-site residues include D407 and E410. The active-site Proton donor is D484.

Belongs to the glycosyl hydrolase 31 family. As to quaternary structure, homohexamer.

It catalyses the reaction Hydrolysis of terminal, non-reducing (1-&gt;4)-linked alpha-D-glucose residues with release of alpha-D-glucose.. The protein is Alpha-glucosidase 2 of Bacillus thermoamyloliquefaciens.